A 545-amino-acid chain; its full sequence is MIQGLESIMNQGTKRILLAATLAATPWQVYGSIEQPSLLPTPPMGFNNWARFMCDLNETLFTETADTMAANGLRDAGYNRINLDDCWMAYQRSDNGSLQWNTTKFPHGLPWLAKYVKAKGFHFGIYEDSGNMTCGGYPGSYNHEEQDANTFASWGIDYLKLDGCNVYATQGRTLEEEYKQRYGHWHQVLSKMQHPLIFSESAPAYFAGTDNNTDWYTVMDWVPIYGELARHSTDILVYSGAGSAWDSIMNNYNYNTLLARYQRPGYFNDPDFLIPDHPGLTADEKRSHFALWASFSAPLIISAYIPALSKDEIAFLTNEALIAVNQDPLAQQATLASRDDTLDILTRSLANGDRLLTVLNKGNTTVTRDIPVQWLGLTETDCTYTAEDLWDGKTQKISDHIKIELASHATAVFRLSLPQGCSSVVPTGLVFNTASGNCLTAASNSSVAFQSCNGETSQIWQVTPSGVIRPVSQTTQCLAADGNLVKLQACDSTDSDGQKWTYPVTGNLKNAKTDGCLTEGSVQMKSCLYERDGQVFGLPSGVQLA.

The first 31 residues, 1–31, serve as a signal peptide directing secretion; sequence MIQGLESIMNQGTKRILLAATLAATPWQVYG. A disulfide bridge links C54 with C86. N-linked (GlcNAc...) asparagine glycosylation is found at N57, N95, N101, and N131. An intrachain disulfide couples C134 to C164. Residue D162 is the Nucleophile of the active site. Residue N211 is glycosylated (N-linked (GlcNAc...) asparagine). The Proton donor role is filled by D220. N-linked (GlcNAc...) asparagine glycosylation is found at N363 and N444. In terms of domain architecture, Ricin B-type lectin spans 421–518; sequence CSSVVPTGLV…KNAKTDGCLT (98 aa). Disulfide bonds link C438–C452 and C477–C490.

The protein belongs to the glycosyl hydrolase 27 family. A C-terminal Ser/Thr-rich region may provide possible sites for O-glycosylation.

It localises to the secreted. The enzyme catalyses Hydrolysis of terminal, non-reducing alpha-D-galactose residues in alpha-D-galactosides, including galactose oligosaccharides, galactomannans and galactolipids.. In terms of biological role, hydrolyzes a variety of simple alpha-D-galactoside as well as more complex molecules such as oligosaccharides and polysaccharides. The polypeptide is Alpha-galactosidase A (aglA) (Aspergillus niger).